The following is a 267-amino-acid chain: HTH-type transcriptional activator CsvR (267 aa).

2 consecutive DNA-binding regions (H-T-H motif) follow at residues 183-204 (AIIA…ESED) and 230-253 (ISQI…NKHF).

In terms of assembly, homodimer.

Its function is as follows. Transcriptional activator of fimbrial genes in enterotoxigenic E.coli. The polypeptide is HTH-type transcriptional activator CsvR (Escherichia coli).